Reading from the N-terminus, the 822-residue chain is Sodium/hydrogen exchanger 1 (822 aa).

Over 1 to 102 the chain is Extracellular; the sequence is MMLRWSGIWG…FPVLDIDYLH (102 aa). Residues 41–73 are disordered; that stretch reads SPTANTIRGAEPPRERSIGDVTTAPSEPVHHPD. The chain crosses the membrane as a helical span at residues 103-125; the sequence is VRTPFEISLWILLACLMKIGFHV. The Cytoplasmic portion of the chain corresponds to 126 to 134; sequence IPTISSIVP. Residues 135–152 form a helical membrane-spanning segment; that stretch reads ESCLLIVVGLLVGGLIKG. The Extracellular portion of the chain corresponds to 153-162; it reads VGETPPFLQS. Residues 163–180 traverse the membrane as a helical segment; the sequence is DVFFLFLLPPIILDAGYF. At 181–190 the chain is on the cytoplasmic side; it reads LPLRQFTENL. The chain crosses the membrane as a helical span at residues 191–219; it reads GTILIFAVVGTLWNAFFLGGLLYAVCLVG. Residues 220–226 lie on the Extracellular side of the membrane; it reads GEQINNI. A helical membrane pass occupies residues 227-253; the sequence is GLLDTLLFGSIISAVDPVAVVAVFEEI. Topologically, residues 254-256 are cytoplasmic; it reads HIN. The helical transmembrane segment at 257 to 287 threads the bilayer; sequence ELLHILVFGESLLNDAVTVVLYHLFEEFANY. Over 288 to 291 the chain is Extracellular; sequence DSIG. The helical transmembrane segment at 292 to 326 threads the bilayer; the sequence is ISDIFLGFLSFFVVALGGVFVGVVYGVIAAFTSRF. Topologically, residues 327–332 are cytoplasmic; the sequence is TSHIRV. A helical membrane pass occupies residues 333 to 345; it reads IEPLFVFLYSYMA. The Extracellular portion of the chain corresponds to 346–354; that stretch reads YLSAELFHL. A helical transmembrane segment spans residues 355-375; that stretch reads SGIMALIASGVVMRPYVEANI. Residues 376-377 are Cytoplasmic-facing; that stretch reads SH. The chain crosses the membrane as a helical span at residues 378–408; it reads KSHTTIKYFLKMWSSVSETLIFIFLGVSTVA. Residues 409-414 lie on the Extracellular side of the membrane; sequence GSHQWN. A helical membrane pass occupies residues 415 to 442; the sequence is WTFVISTLLFCLIARVLGVLVLTWFINK. At 443 to 448 the chain is on the cytoplasmic side; sequence FRIVKL. The helical transmembrane segment at 449–473 threads the bilayer; it reads TPKDQFIIAYGGLRGAIAFSLGYLM. Topologically, residues 474–479 are extracellular; the sequence is DKKHFP. Residues 480 to 509 form a helical membrane-spanning segment; sequence MCDLFLTAIITVIFFTVFVQGMTIRPLVDL. The interval 507 to 549 is interaction with TESC; it reads VDLLAVKKKQETKRSINEEIHTQFLDHLLTGIEDICGHYGHHH. Residues 510–822 are Cytoplasmic-facing; sequence LAVKKKQETK…EGEPFIPKGE (313 aa). The segment at 513 to 520 is PI(4,5)P2-binding region; it reads KKKQETKR. The segment at 519 to 549 is interaction with CHP2; it reads KRSINEEIHTQFLDHLLTGIEDICGHYGHHH. A confers pH-dependent PI(4,5)P2 binding region spans residues 544–549; that stretch reads HYGHHH. Residues 556–564 are PI(4,5)P2-binding region; it reads RFNKKYVKK. Residues S603 and S606 each carry the phosphoserine modification. At T607 the chain carries Phosphothreonine. 2 positions are modified to phosphoserine: S609 and S652. Residues 637–822 form an interaction with TESC region; that stretch reads KILRSNLQKT…EGEPFIPKGE (186 aa). Residues 637–822 are interaction with CALM1; that stretch reads KILRSNLQKT…EGEPFIPKGE (186 aa). The tract at residues 688–691 is interaction with PPP3CA; that stretch reads LTVP. Phosphoserine is present on residues S697, S701, and S707. The interaction with PPP3CA stretch occupies residues 719-724; that stretch reads PVITID. Phosphoserine is present on residues S727, S730, and S733. The segment at 752–822 is disordered; sequence PTRLTRGEED…EGEPFIPKGE (71 aa). A Phosphothreonine modification is found at T756. Over residues 759–768 the composition is skewed to acidic residues; it reads EEDEDEDEDG. T786 is subject to Phosphothreonine. S792, S794, and S803 each carry phosphoserine.

Belongs to the monovalent cation:proton antiporter 1 (CPA1) transporter (TC 2.A.36) family. In terms of assembly, homodimer; dimerization is crucial for its function. Oligomer. Interacts with CALM in a calcium-dependent manner. Interacts with TESC. Interacts (via the juxtamembrane region of the cytoplasmic C-terminal domain) with CHP1; the interaction occurs at the plasma membrane in a calcium-dependent manner. Interacts with CHP2; the interaction occurs in a calcium-dependent manner. Interacts with EZR; regulates the cytoskeletal interactions of SLC9A1 and promotes stress fiber formation. Ubiquitinated, leading to its degradation by the proteasome. Ubiquitination is reduced by CHP1. Post-translationally, O-glycosylated. In terms of processing, palmitoylated; may play a major role in SLC9A1 regulation. Phosphorylation at Thr-786 increases SLC9A1 activity. Specifically dephosphorylated at Thr-786 by PPP3CA that negatively regulates SLC9A1 activity. Phosphorylation at Ser-652 by AKT1 reduces SLC9A1 binding to CALM1.

The protein resides in the cell membrane. It is found in the basolateral cell membrane. It catalyses the reaction Na(+)(in) + H(+)(out) = Na(+)(out) + H(+)(in). It carries out the reaction Li(+)(out) + H(+)(in) = Li(+)(in) + H(+)(out). The catalysed reaction is Li(+)(in) + Na(+)(out) = Li(+)(out) + Na(+)(in). Its activity is regulated as follows. Activated at acidic pHs. Inhibited by amiloride and 5-amino-substituted derivatives. Inhibited by cariporide and eniporide. Phosphatidylinositol 4,5-bisphosphate (PI(4,5)P2) and phosphatidylinositol 3,4,5-trisphosphate (PI(3,4,5)P3) bind and differentially regulate SLC9A1 activity. Electroneutral Na(+) /H(+) antiporter that extrudes Na(+) in exchange for external protons driven by the inward sodium ion chemical gradient, protecting cells from acidification that occurs from metabolism. Exchanges intracellular H(+) ions for extracellular Na(+) in 1:1 stoichiometry. Plays a key role in maintening intracellular pH neutral and cell volume, and thus is important for cell growth, proliferation, migration and survival. In addition, can transport lithium Li(+) and also functions as a Na(+)/Li(+) antiporter. SLC9A1 also functions in membrane anchoring and organization of scaffolding complexes that coordinate signaling inputs. In Cricetulus griseus (Chinese hamster), this protein is Sodium/hydrogen exchanger 1 (SLC9A1).